Here is a 74-residue protein sequence, read N- to C-terminus: Consomatin Gh1 (74 aa).

An N-terminal signal peptide occupies residues 1 to 22; the sequence is MQTACWVMVMMMVWITAPLSEG. Residues 23 to 57 constitute a propeptide that is removed on maturation; it reads GKLNDVIRGLVPDDVTPQLILRSLFFHRPSDSVVR. An intrachain disulfide couples Cys65 to Cys70. Trp67 carries the post-translational modification D-tryptophan. 4-hydroxyproline occurs at positions 71, 72, and 74.

This sequence belongs to the conotoxin C superfamily. Consomatin family. Expressed by the venom duct.

Its subcellular location is the secreted. Its function is as follows. Moderately activates human somatostatin receptors (SSTR) with a preferential activation of SSTR1 and SSTR4. In vivo, does not cause behavioral changes in mice within a few minutes of intracranial injection, but causes a progressive loss of movement thereafter. Four to five hours after injection, mice recover, even with the highest dose tested. Shows antinociception and antihyperalgesia activities in two mouse models of acute pain, most probably by acting outside the central nervous system. The polypeptide is Consomatin Gh1 (Conus grahami (Cone snail)).